A 518-amino-acid polypeptide reads, in one-letter code: Sodium-dependent glucose transporter 1 (518 aa).

Helical transmembrane passes span 19–39 (TFQDLATNVNRNISSLSFIFV), 53–73 (GFLVDVMNYFLLLGISMSATT), 82–102 (CKTAILLTVMMSIFGVSIGIL), 107–127 (NVLILAIWGDKGAPHMQALHF), 139–159 (LAKLALGPTASAENHTESDFH), 221–241 (FRRAKYHNALLCLLFLFFFFY), 307–327 (TSSLFLVLFDKNPICLWIATS), 347–367 (YTTIHGKSAAFFVIGASLGEM), 376–396 (LQGKYPDLPVVLYTSLGASIA), 400–420 (LFPVLYKLATSPLDRQRKEDR), 438–458 (EEENEEEDAEKWNEMDFEMIE), and 466–486 (SIIETSRSSLTEPTAEVYNQY). Positions 414 to 426 (RQRKEDRKSEDQK) are enriched in basic and acidic residues. The segment at 414–448 (RQRKEDRKSEDQKALLSSSGLNEYEEENEEEDAEK) is disordered. The segment covering 436-448 (EYEEENEEEDAEK) has biased composition (acidic residues).

The protein belongs to the major facilitator superfamily.

The protein resides in the apical cell membrane. Its function is as follows. May function as a sodium-dependent glucose transporter. Potential channels for urea in the inner medulla of kidney. The polypeptide is Sodium-dependent glucose transporter 1 (Homo sapiens (Human)).